Reading from the N-terminus, the 88-residue chain is Insertion element ISR1 uncharacterized 10 kDa protein A3 (88 aa).

Belongs to the transposase 8 family.

The protein is Insertion element ISR1 uncharacterized 10 kDa protein A3 of Rhizobium sp.